The chain runs to 89 residues: Small ribosomal subunit protein uS15 (89 aa).

This sequence belongs to the universal ribosomal protein uS15 family. Part of the 30S ribosomal subunit. Forms a bridge to the 50S subunit in the 70S ribosome, contacting the 23S rRNA.

Functionally, one of the primary rRNA binding proteins, it binds directly to 16S rRNA where it helps nucleate assembly of the platform of the 30S subunit by binding and bridging several RNA helices of the 16S rRNA. Its function is as follows. Forms an intersubunit bridge (bridge B4) with the 23S rRNA of the 50S subunit in the ribosome. The chain is Small ribosomal subunit protein uS15 from Haemophilus influenzae (strain 86-028NP).